Here is a 116-residue protein sequence, read N- to C-terminus: Protein TCL1B1 (116 aa).

Belongs to the TCL1 family.

The sequence is that of Protein TCL1B1 (Tcl1b1) from Mus musculus (Mouse).